The chain runs to 86 residues: Cytochrome c oxidase subunit 6B1 (86 aa).

The residue at position 2 (A2) is an N-acetylalanine. Residues 27 to 73 (TRNCWQNYLDFHRCEKAMTAKGGDVSVCEWYRRVYKSLCPISWVSTW) enclose the CHCH domain. The Cx9C motif signature appears at 30 to 40 (CWQNYLDFHRC). Cystine bridges form between C30–C65 and C40–C54. Positions 54–65 (CEWYRRVYKSLC) match the Cx10C motif motif. K62 bears the N6-acetyllysine mark.

The protein belongs to the cytochrome c oxidase subunit 6B family. As to quaternary structure, component of the cytochrome c oxidase (complex IV, CIV), a multisubunit enzyme composed of 14 subunits. The complex is composed of a catalytic core of 3 subunits MT-CO1, MT-CO2 and MT-CO3, encoded in the mitochondrial DNA, and 11 supernumerary subunits COX4I1 (or COX4I2), COX5A, COX5B, COX6A2 (or COX6A1), COX6B1 (or COX6B2), COX6C, COX7A1 (or COX7A2), COX7B, COX7C, COX8B and NDUFA4, which are encoded in the nuclear genome. The complex exists as a monomer or a dimer and forms supercomplexes (SCs) in the inner mitochondrial membrane with NADH-ubiquinone oxidoreductase (complex I, CI) and ubiquinol-cytochrome c oxidoreductase (cytochrome b-c1 complex, complex III, CIII), resulting in different assemblies (supercomplex SCI(1)III(2)IV(1) and megacomplex MCI(2)III(2)IV(2)).

It is found in the mitochondrion inner membrane. It participates in energy metabolism; oxidative phosphorylation. Its function is as follows. Component of the cytochrome c oxidase, the last enzyme in the mitochondrial electron transport chain which drives oxidative phosphorylation. The respiratory chain contains 3 multisubunit complexes succinate dehydrogenase (complex II, CII), ubiquinol-cytochrome c oxidoreductase (cytochrome b-c1 complex, complex III, CIII) and cytochrome c oxidase (complex IV, CIV), that cooperate to transfer electrons derived from NADH and succinate to molecular oxygen, creating an electrochemical gradient over the inner membrane that drives transmembrane transport and the ATP synthase. Cytochrome c oxidase is the component of the respiratory chain that catalyzes the reduction of oxygen to water. Electrons originating from reduced cytochrome c in the intermembrane space (IMS) are transferred via the dinuclear copper A center (CU(A)) of subunit 2 and heme A of subunit 1 to the active site in subunit 1, a binuclear center (BNC) formed by heme A3 and copper B (CU(B)). The BNC reduces molecular oxygen to 2 water molecules using 4 electrons from cytochrome c in the IMS and 4 protons from the mitochondrial matrix. The polypeptide is Cytochrome c oxidase subunit 6B1 (COX6B1) (Bos taurus (Bovine)).